The following is a 171-amino-acid chain: Translationally-controlled tumor protein homolog (171 aa).

One can recognise a TCTP domain in the interval 1–171 (MIIYKDIITG…FKDGLEIEKC (171 aa)).

Belongs to the TCTP family.

The protein resides in the cytoplasm. Its function is as follows. Involved in calcium binding and microtubule stabilization. This chain is Translationally-controlled tumor protein homolog (tpt1), found in Labeo rohita (Indian major carp).